Consider the following 406-residue polypeptide: Enoyl-[acyl-carrier-protein] reductase [NADH] (406 aa).

Residues glycine 48 to phenylalanine 53, phenylalanine 74 to glutamate 75, aspartate 111 to alanine 112, and isoleucine 140 to alanine 141 contribute to the NAD(+) site. Tyrosine 226 is a binding site for substrate. The Proton donor role is filled by tyrosine 236. NAD(+)-binding positions include lysine 245 and leucine 275–threonine 277.

This sequence belongs to the TER reductase family. Monomer.

It catalyses the reaction a 2,3-saturated acyl-[ACP] + NAD(+) = a (2E)-enoyl-[ACP] + NADH + H(+). It functions in the pathway lipid metabolism; fatty acid biosynthesis. Functionally, involved in the final reduction of the elongation cycle of fatty acid synthesis (FAS II). Catalyzes the reduction of a carbon-carbon double bond in an enoyl moiety that is covalently linked to an acyl carrier protein (ACP). The sequence is that of Enoyl-[acyl-carrier-protein] reductase [NADH] from Coxiella burnetii (strain Dugway 5J108-111).